The sequence spans 196 residues: Peptidyl-tRNA hydrolase (196 aa).

Residue tyrosine 18 coordinates tRNA. Histidine 23 serves as the catalytic Proton acceptor. TRNA-binding residues include phenylalanine 69, asparagine 71, and asparagine 117.

It belongs to the PTH family. As to quaternary structure, monomer.

It localises to the cytoplasm. The enzyme catalyses an N-acyl-L-alpha-aminoacyl-tRNA + H2O = an N-acyl-L-amino acid + a tRNA + H(+). In terms of biological role, hydrolyzes ribosome-free peptidyl-tRNAs (with 1 or more amino acids incorporated), which drop off the ribosome during protein synthesis, or as a result of ribosome stalling. Its function is as follows. Catalyzes the release of premature peptidyl moieties from peptidyl-tRNA molecules trapped in stalled 50S ribosomal subunits, and thus maintains levels of free tRNAs and 50S ribosomes. The protein is Peptidyl-tRNA hydrolase of Vibrio cholerae serotype O1 (strain ATCC 39315 / El Tor Inaba N16961).